The following is a 76-amino-acid chain: Protein sigN132 (76 aa).

The segment covering 1-13 has biased composition (polar residues); that stretch reads MLFESISTLSNLK. The interval 1-33 is disordered; sequence MLFESISTLSNLKSASKSSMIASTGSTSSKSSN. The segment covering 14 to 33 has biased composition (low complexity); sequence SASKSSMIASTGSTSSKSSN.

This chain is Protein sigN132, found in Dictyostelium discoideum (Social amoeba).